The sequence spans 426 residues: Proline--tRNA ligase (426 aa).

The protein belongs to the class-II aminoacyl-tRNA synthetase family. ProS type 2 subfamily. Homodimer.

The protein localises to the cytoplasm. The enzyme catalyses tRNA(Pro) + L-proline + ATP = L-prolyl-tRNA(Pro) + AMP + diphosphate. Functionally, catalyzes the attachment of proline to tRNA(Pro) in a two-step reaction: proline is first activated by ATP to form Pro-AMP and then transferred to the acceptor end of tRNA(Pro). The sequence is that of Proline--tRNA ligase from Ehrlichia ruminantium (strain Gardel).